Reading from the N-terminus, the 679-residue chain is E3 ubiquitin ligase RNF157 (679 aa).

Gly2 carries the N-myristoyl glycine lipid modification. The RING-type zinc finger occupies 277 to 316 (CVVCLSDVRDTLILPCRHLCLCNTCADTLRYQANNCPICR). A D-box 1 motif is present at residues 329–332 (RKKL). Polar residues-rich tracts occupy residues 339–349 (SFNPIISSQTS) and 478–537 (ESEN…SMSG). Disordered regions lie at residues 339–362 (SFNPIISSQTSDSEEHPSSENIPP), 416–604 (LDRL…TQEG), and 650–679 (VSRNAQRRRLSSSSLEDSETRPCVWGPLAV). Residues 585 to 598 (QDAEGNDVIEEEDG) show a composition bias toward acidic residues. The D-box 2 signature appears at 656-659 (RRRL). A phosphoserine mark is found at Ser660, Ser661, Ser662, and Ser663.

As to quaternary structure, interacts with APBB1. Interacts with CHD1; CHD1-binding controls RNF157 stability. Interacts with ATRN, MEGF8, TECR, MSI2, PLRG1, BYSL, MTERF3, PSMA1, MRPS18B, PRPF4, FASTKD2, SLC25A1, SMU1, CNOT9, MRPS2, MAGT1, FXR2, EMD, PSMD8, HDAC1, RAN, HSD17B12, TXNDC5 and MRPL19. Phosphorylation at Ser-660, Ser-661, Ser-662 and Ser-663 downstream of the PI3K and MAPK pathways influences the E3 ligase activity and stability of RNF157 during the cell cycle in an anaphase-promoting complex/cyclosome-CDH1-dependent manner.

It is found in the cytoplasm. The enzyme catalyses S-ubiquitinyl-[E2 ubiquitin-conjugating enzyme]-L-cysteine + [acceptor protein]-L-lysine = [E2 ubiquitin-conjugating enzyme]-L-cysteine + N(6)-ubiquitinyl-[acceptor protein]-L-lysine.. In terms of biological role, E3 ubiquitin ligase that ubiquitinates APBB1 for its degradation by the proteasome and thus prevents apoptosis and promotes survival of neurons. Has a dual role in neurons as it is also required for dendrite growth and maintenance for which its ligase activity is not critical. May act as a scaffold molecule to regulate this process. Acts as a downstream effector of the interconnected PI3K and MAPK signaling pathways and thus participates in the regulation of the cell cycle. This chain is E3 ubiquitin ligase RNF157 (RNF157), found in Homo sapiens (Human).